Reading from the N-terminus, the 312-residue chain is Acetylglutamate kinase (312 aa).

Residues 69–70 (GG), arginine 91, and asparagine 191 each bind substrate.

Belongs to the acetylglutamate kinase family. ArgB subfamily.

It localises to the cytoplasm. It catalyses the reaction N-acetyl-L-glutamate + ATP = N-acetyl-L-glutamyl 5-phosphate + ADP. It functions in the pathway amino-acid biosynthesis; L-arginine biosynthesis; N(2)-acetyl-L-ornithine from L-glutamate: step 2/4. Its function is as follows. Catalyzes the ATP-dependent phosphorylation of N-acetyl-L-glutamate. The chain is Acetylglutamate kinase from Streptomyces griseus subsp. griseus (strain JCM 4626 / CBS 651.72 / NBRC 13350 / KCC S-0626 / ISP 5235).